We begin with the raw amino-acid sequence, 252 residues long: Large ribosomal subunit protein uL4 (252 aa).

The protein belongs to the universal ribosomal protein uL4 family. Part of the 50S ribosomal subunit.

Its function is as follows. One of the primary rRNA binding proteins, this protein initially binds near the 5'-end of the 23S rRNA. It is important during the early stages of 50S assembly. It makes multiple contacts with different domains of the 23S rRNA in the assembled 50S subunit and ribosome. Functionally, forms part of the polypeptide exit tunnel. The protein is Large ribosomal subunit protein uL4 of Methanococcus vannielii (strain ATCC 35089 / DSM 1224 / JCM 13029 / OCM 148 / SB).